A 490-amino-acid chain; its full sequence is MNDMAVRVRFCPSPTGTPHVGLIRTALFNWAYARHTGGTFVFRIEDTDSARDSEESYQAILDALNWLGLDYDEGPEIGGPYAPYRQSQRRDLYRDVIDRLIAAGEAYEAYSTAEEVEARHLAAGRNPKLGYDNFDRDLTDEQRAAHRAEGRNPVIRLRMPERDITWRDLVRGETTFGAGTMPDFALTRGNGEPLYTLVNPVDDALMKITHVLRGEDLLPSTPRQIALYEALIRIGVADGVPEFAHLPSVLGDGNKKLSKRDPQSNLFLHRDRGFIPEGLLNYLALLGWGIADDRDVFSLDEMVAAFDVVDVNSNPARFDQKKADALNAEHIRLLSEDEFTARLKAYFAAHGHDTGLDDAQFAEAARLVQTRIVVLGDAWGLLKFLDEGAFVLDEKAAAKELKADAVPVLDAALAGLEGVGQWTTGAIEEALKKALLEDLELKPRKAFGPIRVAATGASVSPPLFESLELLGRDRSLARLRAGRDHAAAAA.

Residues 12–22 carry the 'HIGH' region motif; it reads PSPTGTPHVGL. The short motif at 256 to 260 is the 'KMSKS' region element; that stretch reads KLSKR. ATP is bound at residue Lys-259.

It belongs to the class-I aminoacyl-tRNA synthetase family. Glutamate--tRNA ligase type 1 subfamily. As to quaternary structure, monomer.

It is found in the cytoplasm. It carries out the reaction tRNA(Glu) + L-glutamate + ATP = L-glutamyl-tRNA(Glu) + AMP + diphosphate. Its function is as follows. Catalyzes the attachment of glutamate to tRNA(Glu) in a two-step reaction: glutamate is first activated by ATP to form Glu-AMP and then transferred to the acceptor end of tRNA(Glu). The polypeptide is Glutamate--tRNA ligase (Mycobacterium sp. (strain KMS)).